We begin with the raw amino-acid sequence, 503 residues long: Glycerol kinase (503 aa).

Residue threonine 14 participates in ADP binding. 3 residues coordinate ATP: threonine 14, threonine 15, and serine 16. Threonine 14 provides a ligand contact to sn-glycerol 3-phosphate. Arginine 18 is an ADP binding site. Sn-glycerol 3-phosphate is bound by residues arginine 84, glutamate 85, tyrosine 136, and aspartate 246. Glycerol contacts are provided by arginine 84, glutamate 85, tyrosine 136, aspartate 246, and glutamine 247. ADP-binding residues include threonine 268 and glycine 311. Threonine 268, glycine 311, glutamine 315, and glycine 412 together coordinate ATP. 2 residues coordinate ADP: glycine 412 and asparagine 416. A compositionally biased stretch (basic and acidic residues) spans 468–481; it reads ERTFSPDSDNEKRE. Residues 468 to 489 are disordered; that stretch reads ERTFSPDSDNEKRERRYKGWKK.

It belongs to the FGGY kinase family.

It carries out the reaction glycerol + ATP = sn-glycerol 3-phosphate + ADP + H(+). It functions in the pathway polyol metabolism; glycerol degradation via glycerol kinase pathway; sn-glycerol 3-phosphate from glycerol: step 1/1. Inhibited by fructose 1,6-bisphosphate (FBP). Key enzyme in the regulation of glycerol uptake and metabolism. Catalyzes the phosphorylation of glycerol to yield sn-glycerol 3-phosphate. This chain is Glycerol kinase, found in Haemophilus influenzae (strain ATCC 51907 / DSM 11121 / KW20 / Rd).